Here is a 160-residue protein sequence, read N- to C-terminus: Lipoprotein signal peptidase (160 aa).

A run of 3 helical transmembrane segments spans residues Ile13–Ile33, Trp72–Leu92, and Ser104–Val124. Residues Asp125 and Asp143 contribute to the active site. A helical transmembrane segment spans residues Trp134 to Met154.

It belongs to the peptidase A8 family.

Its subcellular location is the cell inner membrane. The catalysed reaction is Release of signal peptides from bacterial membrane prolipoproteins. Hydrolyzes -Xaa-Yaa-Zaa-|-(S,diacylglyceryl)Cys-, in which Xaa is hydrophobic (preferably Leu), and Yaa (Ala or Ser) and Zaa (Gly or Ala) have small, neutral side chains.. It functions in the pathway protein modification; lipoprotein biosynthesis (signal peptide cleavage). Its function is as follows. This protein specifically catalyzes the removal of signal peptides from prolipoproteins. The sequence is that of Lipoprotein signal peptidase from Buchnera aphidicola subsp. Acyrthosiphon pisum (strain Tuc7).